The primary structure comprises 365 residues: MAAARHSTLDFMLGAKADGETILKGLQSIFQEQGMTESVHTWQDHGYLATYINKNGSFANLRIYPHGLVLLDLQSYDGDAQGKEVDSLLNKVEERMKELSQDSTERVKRLPPIVRGGAIDRYWPTADGRLVEYDIDKVVYDEDSPYQNIKILHSKQFGNILILSGDVNLAESDLAYTRAIMGSGKEDYSGKDVLILGGGDGGILCEIVKLKPKMVTMVEIDQMVIDGCKKYMRKTCGDVLDNLKGDCYQVLIEDCIPVLKRYAKEGREFDYVINDLTAVPISTSPEEDSTWEFLRLILDLSMKVLKQDGKYFTQGNCVNLTEALSLYEEQLGRLYCPVEFSKEIVCVPSYLELWVFYTVWKKAKP.

The residue at position 2 (A2) is an N-acetylalanine. At S57 the chain carries Phosphoserine. Residues 121-361 (RYWPTADGRL…ELWVFYTVWK (241 aa)) enclose the PABS domain. Q147 provides a ligand contact to S-adenosyl 3-(methylsulfanyl)propylamine. Positions 176 and 200 each coordinate spermidine. S-adenosyl 3-(methylsulfanyl)propylamine is bound by residues E219 and 254–255 (DC). Catalysis depends on D275, which acts as the Proton acceptor. Spermidine contacts are provided by Y350 and E352.

The protein belongs to the spermidine/spermine synthase family. Homodimer. Dimerization is mediated through the N-terminal domain and seems to be required for activity as deletion of the N-terminal domain causes complete loss of activity.

It carries out the reaction S-adenosyl 3-(methylsulfanyl)propylamine + spermidine = spermine + S-methyl-5'-thioadenosine + H(+). Its pathway is amine and polyamine biosynthesis; spermine biosynthesis; spermine from spermidine: step 1/1. Its function is as follows. Catalyzes the production of spermine from spermidine and decarboxylated S-adenosylmethionine (dcSAM). The chain is Spermine synthase (SMS) from Bos taurus (Bovine).